Reading from the N-terminus, the 385-residue chain is Succinate--CoA ligase [ADP-forming] subunit beta (385 aa).

Positions 9-244 (KEILRKYGVP…QDEEDPLETR (236 aa)) constitute an ATP-grasp domain. Residues Lys46, 53 to 55 (GRG), Glu99, Cys102, and Glu107 contribute to the ATP site. Residues Asn199 and Asp213 each coordinate Mg(2+). Residues Asn264 and 321 to 323 (GIM) each bind substrate.

This sequence belongs to the succinate/malate CoA ligase beta subunit family. In terms of assembly, heterotetramer of two alpha and two beta subunits. It depends on Mg(2+) as a cofactor.

It catalyses the reaction succinate + ATP + CoA = succinyl-CoA + ADP + phosphate. It carries out the reaction GTP + succinate + CoA = succinyl-CoA + GDP + phosphate. It participates in carbohydrate metabolism; tricarboxylic acid cycle; succinate from succinyl-CoA (ligase route): step 1/1. Its function is as follows. Succinyl-CoA synthetase functions in the citric acid cycle (TCA), coupling the hydrolysis of succinyl-CoA to the synthesis of either ATP or GTP and thus represents the only step of substrate-level phosphorylation in the TCA. The beta subunit provides nucleotide specificity of the enzyme and binds the substrate succinate, while the binding sites for coenzyme A and phosphate are found in the alpha subunit. This chain is Succinate--CoA ligase [ADP-forming] subunit beta, found in Rickettsia bellii (strain OSU 85-389).